The sequence spans 479 residues: Poly(A) polymerase catalytic subunit (479 aa).

Residues D202 and D204 contribute to the active site. Ca(2+) is bound by residues D202, D204, and D253.

This sequence belongs to the poxviridae poly(A) polymerase catalytic subunit family. Heterodimer of a large (catalytic) subunit and a small (regulatory) subunit.

It carries out the reaction RNA(n) + ATP = RNA(n)-3'-adenine ribonucleotide + diphosphate. Its function is as follows. Polymerase that creates the 3'-poly(A) tail of mRNA's. This chain is Poly(A) polymerase catalytic subunit (OPG063), found in Camelus.